We begin with the raw amino-acid sequence, 331 residues long: Ketol-acid reductoisomerase (NADP(+)) (331 aa).

A KARI N-terminal Rossmann domain is found at 2–182; it reads ARMYYDQDAN…GGTRAGILET (181 aa). NADP(+) is bound by residues 25 to 28, serine 51, serine 53, and 83 to 86; these read YGSQ and DEVQ. Histidine 108 is an active-site residue. Glycine 134 contributes to the NADP(+) binding site. The region spanning 183-328 is the KARI C-terminal knotted domain; the sequence is TFREETETDL…KDLRAMFSWL (146 aa). Residues aspartate 191, glutamate 195, glutamate 227, and glutamate 231 each contribute to the Mg(2+) site. Residue serine 252 coordinates substrate.

It belongs to the ketol-acid reductoisomerase family. In terms of assembly, homooctamer. Mg(2+) is required as a cofactor.

The enzyme catalyses (2R)-2,3-dihydroxy-3-methylbutanoate + NADP(+) = (2S)-2-acetolactate + NADPH + H(+). It catalyses the reaction (2R,3R)-2,3-dihydroxy-3-methylpentanoate + NADP(+) = (S)-2-ethyl-2-hydroxy-3-oxobutanoate + NADPH + H(+). It functions in the pathway amino-acid biosynthesis; L-isoleucine biosynthesis; L-isoleucine from 2-oxobutanoate: step 2/4. It participates in amino-acid biosynthesis; L-valine biosynthesis; L-valine from pyruvate: step 2/4. In terms of biological role, involved in the biosynthesis of branched-chain amino acids (BCAA). Catalyzes an alkyl-migration followed by a ketol-acid reduction of (S)-2-acetolactate (S2AL) to yield (R)-2,3-dihydroxy-isovalerate. In the isomerase reaction, S2AL is rearranged via a Mg-dependent methyl migration to produce 3-hydroxy-3-methyl-2-ketobutyrate (HMKB). In the reductase reaction, this 2-ketoacid undergoes a metal-dependent reduction by NADPH to yield (R)-2,3-dihydroxy-isovalerate. This is Ketol-acid reductoisomerase (NADP(+)) from Synechocystis sp. (strain ATCC 27184 / PCC 6803 / Kazusa).